A 146-amino-acid polypeptide reads, in one-letter code: Hemoglobin subunit beta-2 (146 aa).

Residues 2–146 form the Globin domain; it reads HWSAEEKQLI…VAHALARRYH (145 aa). His-63 and His-92 together coordinate heme b.

This sequence belongs to the globin family. As to quaternary structure, heterotetramer of two alpha chains and two beta chains. In terms of tissue distribution, red blood cells.

Functionally, involved in oxygen transport from the lung to the various peripheral tissues. This Naja naja (Indian cobra) protein is Hemoglobin subunit beta-2 (HBB2).